Reading from the N-terminus, the 204-residue chain is Outer-membrane lipoprotein carrier protein (204 aa).

Positions 1 to 21 (MKKIAIVGALLTSFVASSVWA) are cleaved as a signal peptide. Positions 169 to 204 (QRSSYQLKSQQNGAIDASKFTFTPPQGVTVDDQRNK) are disordered. The segment covering 171–181 (SSYQLKSQQNG) has biased composition (polar residues).

This sequence belongs to the LolA family. As to quaternary structure, monomer.

It is found in the periplasm. Participates in the translocation of lipoproteins from the inner membrane to the outer membrane. Only forms a complex with a lipoprotein if the residue after the N-terminal Cys is not an aspartate (The Asp acts as a targeting signal to indicate that the lipoprotein should stay in the inner membrane). The sequence is that of Outer-membrane lipoprotein carrier protein from Enterobacter sp. (strain 638).